The sequence spans 246 residues: tRNA pseudouridine synthase A (246 aa).

Residue aspartate 52 is the Nucleophile of the active site. Tyrosine 111 lines the substrate pocket.

The protein belongs to the tRNA pseudouridine synthase TruA family. In terms of assembly, homodimer.

The catalysed reaction is uridine(38/39/40) in tRNA = pseudouridine(38/39/40) in tRNA. Its function is as follows. Formation of pseudouridine at positions 38, 39 and 40 in the anticodon stem and loop of transfer RNAs. This is tRNA pseudouridine synthase A from Ehrlichia ruminantium (strain Welgevonden).